The chain runs to 153 residues: LOB domain-containing protein 26 (153 aa).

Positions 4-105 constitute an LOB domain; sequence NPCEVCRFQN…EEVSKTKKLL (102 aa). Positions 126-153 are disordered; it reads KSKPSVLRKRKRKTKSSDESAIRVVEDS. Positions 140–153 are enriched in basic and acidic residues; that stretch reads KSSDESAIRVVEDS.

This sequence belongs to the LOB domain-containing protein family.

This is LOB domain-containing protein 26 (LBD26) from Arabidopsis thaliana (Mouse-ear cress).